Consider the following 101-residue polypeptide: Small ribosomal subunit protein bS18c (101 aa).

This sequence belongs to the bacterial ribosomal protein bS18 family. As to quaternary structure, part of the 30S ribosomal subunit.

It localises to the plastid. Its subcellular location is the chloroplast. In Populus alba (White poplar), this protein is Small ribosomal subunit protein bS18c.